Here is a 472-residue protein sequence, read N- to C-terminus: Methanethiol oxidase (472 aa).

Ala2 carries the N-acetylalanine modification. Phosphoserine occurs at positions 111 and 467.

This sequence belongs to the selenium-binding protein family. Interacts with USP33. Post-translationally, the N-terminus is blocked. Present in liver and colon (at protein level).

The protein localises to the nucleus. It localises to the cytoplasm. It is found in the cytosol. The protein resides in the membrane. It carries out the reaction methanethiol + O2 + H2O = hydrogen sulfide + formaldehyde + H2O2 + H(+). It participates in organosulfur degradation. In terms of biological role, catalyzes the oxidation of methanethiol, an organosulfur compound known to be produced in substantial amounts by gut bacteria. Selenium-binding protein which may be involved in the sensing of reactive xenobiotics in the cytoplasm. May be involved in intra-Golgi protein transport. The protein is Methanethiol oxidase (Selenbp1) of Rattus norvegicus (Rat).